A 73-amino-acid chain; its full sequence is Biotin/lipoyl attachment protein (73 aa).

Residues 2–69 (TVSIQMAGNL…NEGDVLLELS (68 aa)) form the Biotinyl-binding domain. Position 35 is an N6-biotinyllysine; alternate (Lys-35). The residue at position 35 (Lys-35) is an N6-lipoyllysine; alternate.

Can be both biotinylated and lipoylated on Lys-35 upon overexpression in E.coli depending on the growth medium; the nature of the modification in situ in B.subtilis is unknown.

This is Biotin/lipoyl attachment protein (yngHB) from Bacillus subtilis (strain 168).